Here is a 302-residue protein sequence, read N- to C-terminus: Ribosomal protein L11 methyltransferase (302 aa).

Threonine 155, glycine 176, aspartate 198, and asparagine 239 together coordinate S-adenosyl-L-methionine.

The protein belongs to the methyltransferase superfamily. PrmA family.

It localises to the cytoplasm. The catalysed reaction is L-lysyl-[protein] + 3 S-adenosyl-L-methionine = N(6),N(6),N(6)-trimethyl-L-lysyl-[protein] + 3 S-adenosyl-L-homocysteine + 3 H(+). Methylates ribosomal protein L11. In Caldicellulosiruptor saccharolyticus (strain ATCC 43494 / DSM 8903 / Tp8T 6331), this protein is Ribosomal protein L11 methyltransferase.